We begin with the raw amino-acid sequence, 169 residues long: Glycine-rich RNA-binding protein GRP2A (169 aa).

Residues 8 to 86 (YRCFVGGLAW…RSITVNEAQS (79 aa)) form the RRM domain. 2 disordered regions span residues 69-100 (MNGQ…GGGG) and 125-169 (YSGG…GGGW). The span at 89 to 100 (SGAGGGGRGGGG) shows a compositional bias: gly residues.

As to expression, predominantly expressed in meristematic and growing tissue.

It localises to the nucleus. Its function is as follows. May play a general role in circadian phenomena associated with meristematic tissue. This Sinapis alba (White mustard) protein is Glycine-rich RNA-binding protein GRP2A.